Here is a 447-residue protein sequence, read N- to C-terminus: MTAHEVNFDGLVGLTHHYAGLSFGNEASTRHRFQVSNPRLAVKQGLLKMKALADAGFLQAVIPPHERPFIPALRQLGFTGSDEQILDKVARQAPRWLSRVSSASPMWVANAATVCPSADALDGKVHLTVANLNNKFHRALEAPVTEALLRAIFRDENQFSVHSALPQVALLGDEGAANHNRLGGEYGSAGVQLFVYGREEENEIRPARYPARQSREASEAVARLNQVNPQQVIFAQQNPEVIDQGVFHNDVIAVSNRQVLFCHEAAFARQKVLINQLRTRVDGFMAIEVPAEEVSVSDAVATYLFNSQLLSRDDGSMLLVLPRECQDHAGVWRYLNKLVAEDNPIIAIQVFDLRESMANGGGPACLRLRVVLTEEERRAVNPAVMMNDALFTALNAWADRYYRDRLTAADLADPLLLREGREALDVLTRLLDLGSVYPFQQTGAADG.

Residues 19–28 (AGLSFGNEAS), asparagine 110, and 137–138 (HR) each bind substrate. The active site involves glutamate 174. Arginine 212 is a substrate binding site. Residue histidine 248 is part of the active site. Substrate is bound by residues aspartate 250 and asparagine 359. Cysteine 365 serves as the catalytic Nucleophile.

This sequence belongs to the succinylarginine dihydrolase family. In terms of assembly, homodimer.

It catalyses the reaction N(2)-succinyl-L-arginine + 2 H2O + 2 H(+) = N(2)-succinyl-L-ornithine + 2 NH4(+) + CO2. The protein operates within amino-acid degradation; L-arginine degradation via AST pathway; L-glutamate and succinate from L-arginine: step 2/5. Functionally, catalyzes the hydrolysis of N(2)-succinylarginine into N(2)-succinylornithine, ammonia and CO(2). The protein is N-succinylarginine dihydrolase of Salmonella gallinarum (strain 287/91 / NCTC 13346).